Reading from the N-terminus, the 772-residue chain is Transcription factor sdnS (772 aa).

The segment at residues 23–53 (CWECRRRKIRCQFGAGNDTVCLPCQARGSTC) is a DNA-binding region (zn(2)-C6 fungal-type). Disordered stretches follow at residues 94–121 (EAGG…SAQN) and 156–180 (ASML…NSKT). Residues 100-121 (ANRSTTQSNRGSRSPSPDSAQN) are compositionally biased toward polar residues.

Its subcellular location is the nucleus. It participates in antibiotic biosynthesis. Functionally, transcription factor; part of the gene cluster that mediates the biosynthesis of sordarin and hypoxysordarin, glycoside antibiotics with a unique tetracyclic diterpene aglycone structure. First, the geranylgeranyl diphosphate synthase sdnC constructs GGDP from farnesyl diphosphate and isopentenyl diphosphate. The diterpene cyclase sdnA then catalyzes the cyclization of GGDP to afford cycloaraneosene. Cycloaraneosene is then hydroxylated four times by the putative cytochrome P450 monooxygenases sdnB, sdnE, sdnF and sdnH to give a hydroxylated cycloaraneosene derivative such as cycloaraneosene-8,9,13,19-tetraol. Although the order of the hydroxylations is unclear, at least C8, C9 and C13 of the cycloaraneosene skeleton are hydroxylated before the sordaricin formation. Dehydration of the 13-hydroxy group of the hydroxylated cycloaraneosene derivative might be catalyzed by an unassigned hypothetical protein such as sdnG and sdnP to construct the cyclopentadiene moiety. The FAD-dependent oxidoreductase sdnN is proposed to catalyze the oxidation at C9 of the hydroxylated cycloaraneosene derivative and also catalyze the Baeyer-Villiger oxidation to give the lactone intermediate. The presumed lactone intermediate would be hydrolyzed to give an acrolein moiety and a carboxylate moiety. Then, [4+2]cycloaddition would occur between the acrolein moiety and the cyclopentadiene moiety to give sordaricin. SdnN might also be involved in the [4+2]cycloaddition after the hypothesized oxidation to accommodate the oxidized product and prompt the [4+2]cycloaddition. GDP-6-deoxy-D-altrose may be biosynthesized from GDP-D-mannose by the putative GDP-mannose-4,6-dehydratase sdnI and the short-chain dehydrogenase sdnK. The glycosyltransferase sdnJ catalyzes the attachment of 6-deoxy-D-altrose onto the 19-hydroxy group of sordaricin to give 4'-O-demethylsordarin. The methyltransferase sdnD would complete the biosynthesis of sordarin. Sordarin can be further modified into hypoxysordarin. The unique acyl chain at the 3'-hydroxy group of hypoxysordarin would be constructed by an iterative type I PKS sdnO and the trans-acting polyketide methyltransferase sdnL. SdnL would be responsible for the introduction of an alpha-methyl group of the polyketide chain. Alternatively, the beta-lactamase-like protein sdnR might be responsible for the cleavage and transfer of the polyketide chain from the PKS sdnO to sordarin. Two putative cytochrome P450 monooxygenases, sdnQ and sdnT, might catalyze the epoxidations of the polyketide chain to complete the biosynthesis of hypoxysordarin. Transcriptional regulators sdnM and sdnS are presumably encoded for the transcriptional regulation of the expression of the sdn gene cluster. The polypeptide is Transcription factor sdnS (Sordaria araneosa (Pleurage araneosa)).